Here is a 100-residue protein sequence, read N- to C-terminus: Integration host factor subunit beta (100 aa).

It belongs to the bacterial histone-like protein family. As to quaternary structure, heterodimer of an alpha and a beta chain.

Functionally, this protein is one of the two subunits of integration host factor, a specific DNA-binding protein that functions in genetic recombination as well as in transcriptional and translational control. The polypeptide is Integration host factor subunit beta (Rhodospirillum rubrum (strain ATCC 11170 / ATH 1.1.1 / DSM 467 / LMG 4362 / NCIMB 8255 / S1)).